The chain runs to 420 residues: uncharacterized protein (420 aa).

Residues 43–215 (NLCLVLDHSG…HTFRQLFQRM (173 aa)) enclose the VWFA domain. A disordered region spans residues 389-420 (LQSGEDLSEGDRKKTRMVSKTTLQPPSAPSEH).

This is an uncharacterized protein from Synechocystis sp. (strain ATCC 27184 / PCC 6803 / Kazusa).